The sequence spans 321 residues: MQIKDEILALLKKGKNLLAFSYGSDSSALFYLLMQEKIDFDLVMINYKTRKNSDLEELKAKELALKFHKKIFIKHAPKFQSNFEKKARDFRYDFFEKICLEQDYDHLILAHHLNDQFEWFLMQLSRGAGLAEILGMQECEKRQNYTLLRPLLFISKDEISSFLKEKDIFYFHDESNENEKYFRNYIRKNFSNAFVSEFHQGLKRSFSYLDEDRKKLYDFENIKEIQGLLICPKNESLIARAVKMKGLLLSTAQRKELLKGDCVLGGKIALAYKNEQAIVFEYETCQKLPKNFKEECRIAKIPRLLRAYLYNHKIDISSLSF.

Position 21–26 (21–26) interacts with ATP; it reads SYGSDS.

Belongs to the tRNA(Ile)-lysidine synthase family.

It localises to the cytoplasm. The enzyme catalyses cytidine(34) in tRNA(Ile2) + L-lysine + ATP = lysidine(34) in tRNA(Ile2) + AMP + diphosphate + H(+). In terms of biological role, ligates lysine onto the cytidine present at position 34 of the AUA codon-specific tRNA(Ile) that contains the anticodon CAU, in an ATP-dependent manner. Cytidine is converted to lysidine, thus changing the amino acid specificity of the tRNA from methionine to isoleucine. This is tRNA(Ile)-lysidine synthase from Campylobacter jejuni (strain RM1221).